The chain runs to 559 residues: Urocanate hydratase (559 aa).

NAD(+) contacts are provided by residues 50–51 (GG), glutamine 128, 174–176 (GMG), aspartate 194, arginine 199, 240–241 (NA), 261–265 (QTSAH), 271–272 (YI), and tyrosine 320. The active site involves cysteine 408. Residue glycine 490 coordinates NAD(+).

This sequence belongs to the urocanase family. The cofactor is NAD(+).

The protein resides in the cytoplasm. It catalyses the reaction 4-imidazolone-5-propanoate = trans-urocanate + H2O. The protein operates within amino-acid degradation; L-histidine degradation into L-glutamate; N-formimidoyl-L-glutamate from L-histidine: step 2/3. Functionally, catalyzes the conversion of urocanate to 4-imidazolone-5-propionate. The polypeptide is Urocanate hydratase (Halalkalibacterium halodurans (strain ATCC BAA-125 / DSM 18197 / FERM 7344 / JCM 9153 / C-125) (Bacillus halodurans)).